A 386-amino-acid chain; its full sequence is Ovalbumin (386 aa).

G2 carries the N-acetylglycine modification. The segment at residues 22-48 is a signal peptide (not cleaved); it reads HHANENIFYCPIAIMSALAMVYLGAKD. S69 carries the phosphoserine modification. A disulfide bridge links C74 with C121. Residue E192 coordinates Ca(2+). N293 carries N-linked (GlcNAc...) asparagine glycosylation. At S345 the chain carries Phosphoserine.

Belongs to the serpin family. Ov-serpin subfamily. Homodimer. Undergoes proteolytic cleavage first at the canonical P1-P1' site, and then at the P8-P7 site by subtilisin. Major protein of egg white. Expressed in the magnum of the oviduct (at protein level).

It is found in the secreted. Its function is as follows. Non-inhibitory serpin. Storage protein of egg white. This is Ovalbumin (SERPINB14) from Gallus gallus (Chicken).